Consider the following 311-residue polypeptide: MPEQGPRMNGFSLGELCWLFCCPPCPSRIAAKLAFLPPEPTYTVREMEAPASTAQQPPREEGSGEPAACSLHLSERADWQYSQRELDAVEVFRWRTERGSFLGCMFVRCSPGSRYTLLFSHGNAVDLGQMCSFYIGLGTRINCNIFSYDYSGYGVSSGKPSEKNLYADIEAAWHALRTRYGVTPENIILYGQSIGTVPTVDLASRYECAAVILHSPLMSGLRVAFPDTRKTYCFDAFPSIDKISKVTSPVLIIHGTEDEVIDFSHGLAMYERCPRAVEPLWVEGAGHNDIELYAQYLERLKQFISHELPNS.

Residues 48 to 67 are disordered; sequence EAPASTAQQPPREEGSGEPA. Active-site charge relay system residues include serine 193, aspartate 258, and histidine 287.

Belongs to the AB hydrolase superfamily. ABHD17 family. In terms of processing, palmitoylated on cysteine residues located in a cysteine cluster at the N-terminus which promotes membrane localization.

It is found in the recycling endosome membrane. It localises to the cell projection. The protein localises to the dendritic spine. The protein resides in the postsynaptic density membrane. The enzyme catalyses S-hexadecanoyl-L-cysteinyl-[protein] + H2O = L-cysteinyl-[protein] + hexadecanoate + H(+). In terms of biological role, hydrolyzes fatty acids from S-acylated cysteine residues in proteins. Has depalmitoylating activity towards NRAS. The sequence is that of Alpha/beta hydrolase domain-containing protein 17C from Xenopus laevis (African clawed frog).